Reading from the N-terminus, the 106-residue chain is MAKSYGAIFLLTLIVLFMLQTMVMASSGSNVKWSQKRYGPGSLKRTQCPSECDRRCKKTQYHKACITFCNKCCRKCLCVPPGYYGNKQVCSCYNNWKTQEGGPKCP.

The first 25 residues, 1–25, serve as a signal peptide directing secretion; the sequence is MAKSYGAIFLLTLIVLFMLQTMVMA.

The protein belongs to the GASA family. Post-translationally, six disulfide bonds may be present. In terms of tissue distribution, expressed in flower buds, style, stamen filaments, vasculature of petals, root phloem, vasculature of cotyledons and rosette leaves and developing embryo.

The protein localises to the secreted. In terms of biological role, gibberellin-regulated protein involved in the regulation of floral meristem and floral organ identity, and promotion of seed size and weight. May play a role in the promotion of gibberellin responses such as regulation of flowering under short-day conditions, seed germination and inhibition of gibberellin oxidase. Possesses redox activity in E.coli and may function in redox regulation in planta. In Arabidopsis thaliana (Mouse-ear cress), this protein is Gibberellin-regulated protein 4 (GASA4).